Consider the following 106-residue polypeptide: Heat shock protein HspQ (106 aa).

The segment at 80–106 is disordered; sequence DEHLDNDSMDELSQSIRNQLQAPRLRN. Residues 90 to 100 are compositionally biased toward polar residues; sequence ELSQSIRNQLQ.

This sequence belongs to the HspQ family.

The protein resides in the cytoplasm. Functionally, involved in the degradation of certain denaturated proteins, including DnaA, during heat shock stress. In Proteus mirabilis (strain HI4320), this protein is Heat shock protein HspQ.